Consider the following 228-residue polypeptide: DOPA 4,5-dioxygenase (228 aa).

In terms of assembly, homodimer. As to expression, expressed at high level in coloured cap tissue and at least 10 times lower level in the stipe.

It localises to the cytoplasm. Its pathway is pigment biosynthesis; betalain biosynthesis. Extradiol dioxygenase that opens up the cyclic ring of DOPA between carbons 4 and 5 thus producing an unstable seco-DOPA that rearranges non-enzymatically to betalamic acid. Can also catalyze the formation of muscaflavin (a pigment found in the hygrocybe mushrooms family and of some amanita species only) by a 2,3-extradiol cleavage of DOPA. This is DOPA 4,5-dioxygenase (DODA) from Amanita muscaria (Fly agaric).